The sequence spans 71 residues: Small ribosomal subunit protein bS21 (71 aa).

Positions 49–59 (AAAAVKRHAKK) are enriched in basic residues. The segment at 49–71 (AAAAVKRHAKKVQREQRRSVRLY) is disordered. Residues 60–71 (VQREQRRSVRLY) show a composition bias toward basic and acidic residues.

This sequence belongs to the bacterial ribosomal protein bS21 family.

The chain is Small ribosomal subunit protein bS21 from Stutzerimonas stutzeri (strain A1501) (Pseudomonas stutzeri).